The sequence spans 891 residues: Valine--tRNA ligase (891 aa).

Residues 43-53 (PFTSGTLHLGH) carry the 'HIGH' region motif. The 'KMSKS' region motif lies at 536–540 (KMSKS). Lys539 provides a ligand contact to ATP.

This sequence belongs to the class-I aminoacyl-tRNA synthetase family. ValS type 2 subfamily.

It is found in the cytoplasm. It catalyses the reaction tRNA(Val) + L-valine + ATP = L-valyl-tRNA(Val) + AMP + diphosphate. Functionally, catalyzes the attachment of valine to tRNA(Val). As ValRS can inadvertently accommodate and process structurally similar amino acids such as threonine, to avoid such errors, it has a 'posttransfer' editing activity that hydrolyzes mischarged Thr-tRNA(Val) in a tRNA-dependent manner. In Pyrococcus furiosus (strain ATCC 43587 / DSM 3638 / JCM 8422 / Vc1), this protein is Valine--tRNA ligase.